Reading from the N-terminus, the 193-residue chain is dCTP deaminase (193 aa).

Residues 110-115 (RSSLAR), D128, 136-138 (VLE), Y171, K178, and Q182 each bind dCTP. Residue E138 is the Proton donor/acceptor of the active site. The interval 169–193 (RPYNSRQDAKYKGQQGAVASRIDKD) is disordered.

It belongs to the dCTP deaminase family. In terms of assembly, homotrimer.

It carries out the reaction dCTP + H2O + H(+) = dUTP + NH4(+). The protein operates within pyrimidine metabolism; dUMP biosynthesis; dUMP from dCTP (dUTP route): step 1/2. In terms of biological role, catalyzes the deamination of dCTP to dUTP. The protein is dCTP deaminase of Erwinia tasmaniensis (strain DSM 17950 / CFBP 7177 / CIP 109463 / NCPPB 4357 / Et1/99).